The following is a 447-amino-acid chain: Phosphoglucosamine mutase (447 aa).

Ser103 (phosphoserine intermediate) is an active-site residue. The Mg(2+) site is built by Ser103, Asp242, Asp244, and Asp246. At Ser103 the chain carries Phosphoserine.

The protein belongs to the phosphohexose mutase family. Requires Mg(2+) as cofactor. In terms of processing, activated by phosphorylation.

The enzyme catalyses alpha-D-glucosamine 1-phosphate = D-glucosamine 6-phosphate. Catalyzes the conversion of glucosamine-6-phosphate to glucosamine-1-phosphate. This is Phosphoglucosamine mutase from Cereibacter sphaeroides (strain ATCC 17023 / DSM 158 / JCM 6121 / CCUG 31486 / LMG 2827 / NBRC 12203 / NCIMB 8253 / ATH 2.4.1.) (Rhodobacter sphaeroides).